The sequence spans 415 residues: Histidine--tRNA ligase (415 aa).

Belongs to the class-II aminoacyl-tRNA synthetase family. Homodimer.

Its subcellular location is the cytoplasm. The enzyme catalyses tRNA(His) + L-histidine + ATP = L-histidyl-tRNA(His) + AMP + diphosphate + H(+). This is Histidine--tRNA ligase from Clostridium botulinum (strain Kyoto / Type A2).